The primary structure comprises 167 residues: Ubiquitin-fold modifier-conjugating enzyme 1 (167 aa).

Cysteine 116 serves as the catalytic Glycyl thioester intermediate. Lysine 122 is covalently cross-linked (Glycyl lysine isopeptide (Lys-Gly) (interchain with G-Cter in UFM1)).

Belongs to the ubiquitin-conjugating enzyme family. UFC1 subfamily. In terms of assembly, interacts with UBA5 (via C-terminus). Interacts with UFL1. Interacts with UFM1. Interacts with KIRREL3. Ufmylated at Lys-122. Deufmylated by UFSP1.

Functionally, E2-like enzyme which specifically catalyzes the second step in ufmylation. Accepts the ubiquitin-like modifier UFM1 from the E1 enzyme UBA5 and forms an intermediate with UFM1 via a thioester linkage. Ufmylation is involved in various processes, such as ribosome recycling, response to DNA damage, interferon response or reticulophagy (also called ER-phagy). This is Ubiquitin-fold modifier-conjugating enzyme 1 from Bos taurus (Bovine).